The chain runs to 209 residues: Uracil phosphoribosyltransferase (209 aa).

5-phospho-alpha-D-ribose 1-diphosphate-binding positions include R79, R104, and 131-139 (DPMLATGVS). Residues I194 and 199–201 (GDA) each bind uracil. 5-phospho-alpha-D-ribose 1-diphosphate is bound at residue D200.

Belongs to the UPRTase family. The cofactor is Mg(2+).

The enzyme catalyses UMP + diphosphate = 5-phospho-alpha-D-ribose 1-diphosphate + uracil. It participates in pyrimidine metabolism; UMP biosynthesis via salvage pathway; UMP from uracil: step 1/1. Its activity is regulated as follows. Allosterically activated by GTP. Catalyzes the conversion of uracil and 5-phospho-alpha-D-ribose 1-diphosphate (PRPP) to UMP and diphosphate. This Thermotoga petrophila (strain ATCC BAA-488 / DSM 13995 / JCM 10881 / RKU-1) protein is Uracil phosphoribosyltransferase.